A 185-amino-acid chain; its full sequence is Ribosome-recycling factor (185 aa).

Belongs to the RRF family.

The protein localises to the cytoplasm. Its function is as follows. Responsible for the release of ribosomes from messenger RNA at the termination of protein biosynthesis. May increase the efficiency of translation by recycling ribosomes from one round of translation to another. In Symbiobacterium thermophilum (strain DSM 24528 / JCM 14929 / IAM 14863 / T), this protein is Ribosome-recycling factor.